The primary structure comprises 121 residues: Large ribosomal subunit protein uL14 (121 aa).

Belongs to the universal ribosomal protein uL14 family. As to quaternary structure, part of the 50S ribosomal subunit. Forms a cluster with proteins L3 and L19. In the 70S ribosome, L14 and L19 interact and together make contacts with the 16S rRNA in bridges B5 and B8.

Its function is as follows. Binds to 23S rRNA. Forms part of two intersubunit bridges in the 70S ribosome. This Prochlorococcus marinus (strain MIT 9515) protein is Large ribosomal subunit protein uL14.